Here is a 504-residue protein sequence, read N- to C-terminus: uncharacterized protein (504 aa).

3 helical membrane passes run 146–166 (TSAGYAKIVGCALGFPVINIA), 196–216 (SSAAILITGAGAIGTALADVL), and 330–350 (SMALTMALLAAAVLYASVAVA). 372–492 (FLNIDVPLQA…EIAYGVARTR (121 aa)) contacts a nucleoside 3',5'-cyclic phosphate.

It is found in the cell membrane. This is an uncharacterized protein from Mycobacterium tuberculosis (strain CDC 1551 / Oshkosh).